The chain runs to 347 residues: uncharacterized protein (347 aa).

An N-terminal signal peptide occupies residues 1–21 (MNKKSLNIVVMFGILMILAFS).

Belongs to the bacterial solute-binding protein 1 family. WtpA subfamily.

This is an uncharacterized protein from Methanococcus maripaludis (strain C5 / ATCC BAA-1333).